A 33-amino-acid polypeptide reads, in one-letter code: Brevinin-2CDYb (33 aa).

The cysteines at positions 27 and 33 are disulfide-linked.

This sequence belongs to the frog skin active peptide (FSAP) family. Brevinin subfamily. As to expression, expressed by the skin glands.

The protein resides in the secreted. In terms of biological role, antimicrobial peptide. This chain is Brevinin-2CDYb, found in Rana dybowskii (Dybovsky's frog).